The primary structure comprises 347 residues: Nuclear distribution protein nudE-like 1 (347 aa).

Residues 28 to 190 (QSFQEARDEL…LAVRERQQEV (163 aa)) adopt a coiled-coil conformation. Residues 56–166 (VQAEQRNRDL…LDEKESLLVS (111 aa)) form a self-association region. The interaction with KATNB1 stretch occupies residues 64 to 189 (DLQADNQRLK…ELAVRERQQE (126 aa)). The interval 114–133 (YVRELEQANDDLERAKRATI) is required for interaction with PAFAH1B1. Residues 175 to 347 (RDLRQELAVR…SAPGMLPLSV (173 aa)) form an interaction with CENPF region. An interaction with YWHAE region spans residues 189 to 256 (EVTRKSAPSS…SARISALNIV (68 aa)). The segment at 191-347 (TRKSAPSSPT…SAPGMLPLSV (157 aa)) is interaction with NEFL. The interaction with KATNA1 stretch occupies residues 195–256 (APSSPTLDCE…SARISALNIV (62 aa)). Ser-215 bears the Phosphoserine mark. Thr-219 carries the post-translational modification Phosphothreonine; by CDK1 and MAPK1. Position 231 is a phosphoserine (Ser-231). An interaction with DISC1 region spans residues 241–280 (TSPLTPSARISALNIVGDLLRKVGALESKLAACRNFAKDQ). Ser-242 bears the Phosphoserine; by CDK1 mark. Thr-245 is modified (phosphothreonine; by CDK1 and MAPK1). The interval 256-291 (VGDLLRKVGALESKLAACRNFAKDQASRKSYISGNV) is required for localization to the centrosome and interaction with dynein, dynactin, tubulin gamma, PCM1 and PCNT. Cys-273 carries S-palmitoyl cysteine; by ZDHHC2, ZDHHC3 and ZDHHC7 lipidation. Residues 314 to 347 (KGAVNGFDPAPPPPDPGLGSSRPSSAPGMLPLSV) form a disordered region. Phosphoserine is present on Ser-346.

It belongs to the nudE family. As to quaternary structure, self-associates. Interacts with DISC1, dynein, dynactin, tubulin gamma, KATNA1, KATNB1, microtubules, PAFAH1B1, PCM1, PCNT, and YWHAE. Interacts directly with NEFL and indirectly with NEFH. Interacts (via C-terminus) with CENPF. Interacts with ZNF365. Interacts with PLEKHM1 (via N- and C-terminus). Interacts with GTP-bound RAB9A; the interaction may lead to RAB9A-dynein motor tethering. Phosphorylated in mitosis. Can be phosphorylated by CDK1, CDK5 and MAPK1. Phosphorylation by CDK5 promotes interaction with KATNA1 and YWHAE. Post-translationally, palmitoylation at Cys-273 reduces affinity for dynein.

It localises to the cytoplasm. It is found in the cytoskeleton. The protein resides in the microtubule organizing center. Its subcellular location is the centrosome. The protein localises to the chromosome. It localises to the centromere. It is found in the kinetochore. The protein resides in the spindle. Required for organization of the cellular microtubule array and microtubule anchoring at the centrosome. May regulate microtubule organization at least in part by targeting the microtubule severing protein KATNA1 to the centrosome. Also positively regulates the activity of the minus-end directed microtubule motor protein dynein. May enhance dynein-mediated microtubule sliding by targeting dynein to the microtubule plus ends. Required for several dynein- and microtubule-dependent processes such as the maintenance of Golgi integrity, the centripetal motion of secretory vesicles and the coupling of the nucleus and centrosome. Also required during brain development for the migration of newly formed neurons from the ventricular/subventricular zone toward the cortical plate. Required for mitosis in some cell types but appears to be dispensible for mitosis in cortical neuronal progenitors, which instead requires NDE1. Facilitates the polymerization of neurofilaments from the individual subunits NEFH and NEFL. Positively regulates lysosome peripheral distribution and ruffled border formation in osteoclasts. Plays a role, together with DISC1, in the regulation of neurite outgrowth. May act as a RAB9A/B effector that tethers RAB9-associated late endosomes to the dynein motor for their retrograde transport to the trans-Golgi network. The chain is Nuclear distribution protein nudE-like 1 (NDEL1) from Macaca fascicularis (Crab-eating macaque).